A 159-amino-acid polypeptide reads, in one-letter code: Ribosome maturation factor RimM (159 aa).

In terms of domain architecture, PRC barrel spans 86–159; it reads SDAFHLPKLI…IHIETIEGLI (74 aa).

Belongs to the RimM family. As to quaternary structure, binds ribosomal protein uS19.

The protein resides in the cytoplasm. Its function is as follows. An accessory protein needed during the final step in the assembly of 30S ribosomal subunit, possibly for assembly of the head region. Essential for efficient processing of 16S rRNA. May be needed both before and after RbfA during the maturation of 16S rRNA. It has affinity for free ribosomal 30S subunits but not for 70S ribosomes. In Acholeplasma laidlawii (strain PG-8A), this protein is Ribosome maturation factor RimM.